The chain runs to 262 residues: Probable DNA polymerase sliding clamp 1 (262 aa).

Residues 67–86 (KCEHTYELGVNVLNMFKLLR) mediate DNA binding.

This sequence belongs to the PCNA family.

Functionally, sliding clamp subunit. Responsible for tethering the catalytic subunit of DNA polymerase to DNA during high-speed replication. This is Probable DNA polymerase sliding clamp 1 from Chlorella (PBCV-1).